The primary structure comprises 357 residues: MALPASAIGFEGYEKRLEISFFESSFFADPDGKGLRALNKSQIDEILEPAECTIVDSLSNQYLDSYVLSESSLFVYPYKIIIKTCGTTKLLLSIPAILKLAESLSLSVRNVKYTRGSFIFPGAQSFPHRSFSEEVELLDNYFGKLGLESNAFIMGNPDQPQKWHVYSASVGSEQSSDPTYTLEMCMTGLDREKASVFYKSESSSAALMTTRSGIRKILPDSEICDFEFDPCGYSMNSIEEAAISTIHVTPEDGFSYASFEAAGYDLKAQNLGMMIERVLACFQPSEFSVAVHCDVTCKSLEQICSLELKEYSLDEKINEELGLGGSIIYKKFLRIDACGSPRSILKCCWKEDESEEE.

Active-site residues include Glu11 and Glu14. Ser71 (schiff-base intermediate with substrate; via pyruvic acid) is an active-site residue. Residue Ser71 is modified to Pyruvic acid (Ser); by autocatalysis. Residue Cys85 is the Proton donor; for catalytic activity of the active site. Catalysis depends on proton acceptor; for processing activity residues Ser234 and His247.

The protein belongs to the eukaryotic AdoMetDC family. The cofactor is pyruvate. In terms of processing, is synthesized initially as an inactive proenzyme. Formation of the active enzyme involves a self-maturation process in which the active site pyruvoyl group is generated from an internal serine residue via an autocatalytic post-translational modification. Two non-identical subunits are generated from the proenzyme in this reaction, and the pyruvate is formed at the N-terminus of the alpha chain, which is derived from the carboxyl end of the proenzyme. The post-translation cleavage follows an unusual pathway, termed non-hydrolytic serinolysis, in which the side chain hydroxyl group of the serine supplies its oxygen atom to form the C-terminus of the beta chain, while the remainder of the serine residue undergoes an oxidative deamination to produce ammonia and the pyruvoyl group blocking the N-terminus of the alpha chain.

The enzyme catalyses S-adenosyl-L-methionine + H(+) = S-adenosyl 3-(methylsulfanyl)propylamine + CO2. Its pathway is amine and polyamine biosynthesis; S-adenosylmethioninamine biosynthesis; S-adenosylmethioninamine from S-adenosyl-L-methionine: step 1/1. This is S-adenosylmethionine decarboxylase proenzyme (SAMDC) from Catharanthus roseus (Madagascar periwinkle).